The chain runs to 309 residues: UPF0282 protein Saci_0277 (309 aa).

The protein belongs to the UPF0282 family.

The sequence is that of UPF0282 protein Saci_0277 from Sulfolobus acidocaldarius (strain ATCC 33909 / DSM 639 / JCM 8929 / NBRC 15157 / NCIMB 11770).